The chain runs to 149 residues: Alpha-crystallin A chain (149 aa).

The 109-residue stretch at 41 to 149 (LFRSVLESGI…DASHGERPIP (109 aa)) folds into the sHSP domain. Zn(2+) is bound by residues His89, Glu91, His96, and His143.

Belongs to the small heat shock protein (HSP20) family. As to quaternary structure, heteropolymer composed of three CRYAA and one CRYAB subunits. Inter-subunit bridging via zinc ions enhances stability, which is crucial as there is no protein turn over in the lens. Can also form homodimers and homotetramers (dimers of dimers) which serve as the building blocks of homooligomers. Within homooligomers, the zinc-binding motif is created from residues of 3 different molecules. His-89 and Glu-91 from one molecule are ligands of the zinc ion, and His-96 and His-143 residues from additional molecules complete the site with tetrahedral coordination geometry. Part of a complex required for lens intermediate filament formation composed of BFSP1, BFSP2 and CRYAA.

It localises to the cytoplasm. It is found in the nucleus. Its function is as follows. Contributes to the transparency and refractive index of the lens. May act as a chaperone, preventing aggregation of various proteins under a wide range of stress conditions. In Columba livia (Rock dove), this protein is Alpha-crystallin A chain (CRYAA).